A 499-amino-acid polypeptide reads, in one-letter code: Maturase K (499 aa).

Belongs to the intron maturase 2 family. MatK subfamily.

It localises to the plastid. Its subcellular location is the chloroplast. Its function is as follows. Usually encoded in the trnK tRNA gene intron. Probably assists in splicing its own and other chloroplast group II introns. The chain is Maturase K from Gleditsia triacanthos (Common honey-locust).